The sequence spans 296 residues: MESDGGLSRYQKLEKLGEGTYGKVYKAKEKATGRMVALKKIRLEDDGVPSTALREISLLKEVPHPNVVSLFDVLHCQNRLYLVFEYLDQDLKKYMDSVPALCPQLIKSYLYQLLKGLAYSHGHRILHRDLKPQNLLIDRQGALKLADFGLARAVSIPVRVYTHEIVTLWYRAPEVLLGSKSYSVPVDMWSVGCIFGEMLNKKPLFSGDCEIDQIFRIFRVLGTPDDSIWPGVTKLPEYVSTFPNWPGQPYNKIFPRCEPLALDLIAKMLQYEPSKRISAKEALLHPYFGDLDTSFF.

In terms of domain architecture, Protein kinase spans 10 to 288; it reads YQKLEKLGEG…AKEALLHPYF (279 aa). Residues 16-24 and K39 contribute to the ATP site; that span reads LGEGTYGKV. Phosphothreonine is present on T20. Y21 carries the post-translational modification Phosphotyrosine. The active-site Proton acceptor is the D129. A Phosphothreonine; by CAK modification is found at T162.

It belongs to the protein kinase superfamily. CMGC Ser/Thr protein kinase family. CDC2/CDKX subfamily. In terms of assembly, forms a stable but non-covalent complex with a regulatory subunit and with a cyclin.

It catalyses the reaction L-seryl-[protein] + ATP = O-phospho-L-seryl-[protein] + ADP + H(+). The enzyme catalyses L-threonyl-[protein] + ATP = O-phospho-L-threonyl-[protein] + ADP + H(+). It carries out the reaction [DNA-directed RNA polymerase] + ATP = phospho-[DNA-directed RNA polymerase] + ADP + H(+). Its activity is regulated as follows. Phosphorylation at Thr-20 or Tyr-21 inactivates the enzyme, while phosphorylation at Thr-162 activates it. Its function is as follows. Plays a key role in the control of the eukaryotic cell cycle. Required for entry into S-phase and mitosis. p34 is a component of the kinase complex that phosphorylates the repetitive C-terminus of RNA polymerase II. The sequence is that of Cyclin-dependent kinase 1 (cdk1) from Dictyostelium discoideum (Social amoeba).